Here is a 272-residue protein sequence, read N- to C-terminus: Shikimate dehydrogenase (NADP(+)) (272 aa).

Residues 14–16 (SRS) and T61 each bind shikimate. Catalysis depends on K65, which acts as the Proton acceptor. NADP(+) is bound at residue E77. N86 and D102 together coordinate shikimate. NADP(+)-binding positions include 126 to 130 (GVGGA), 149 to 154 (NRTFPR), and M213. Y215 provides a ligand contact to shikimate. G237 lines the NADP(+) pocket.

Belongs to the shikimate dehydrogenase family. As to quaternary structure, homodimer.

The catalysed reaction is shikimate + NADP(+) = 3-dehydroshikimate + NADPH + H(+). Its pathway is metabolic intermediate biosynthesis; chorismate biosynthesis; chorismate from D-erythrose 4-phosphate and phosphoenolpyruvate: step 4/7. Involved in the biosynthesis of the chorismate, which leads to the biosynthesis of aromatic amino acids. Catalyzes the reversible NADPH linked reduction of 3-dehydroshikimate (DHSA) to yield shikimate (SA). The polypeptide is Shikimate dehydrogenase (NADP(+)) (Sodalis glossinidius (strain morsitans)).